Reading from the N-terminus, the 324-residue chain is tRNA dimethylallyltransferase (324 aa).

15–22 (GPTATGKS) lines the ATP pocket. 17-22 (TATGKS) contributes to the substrate binding site. The segment at 40-43 (DSAQ) is interaction with substrate tRNA.

It belongs to the IPP transferase family. Monomer. Mg(2+) serves as cofactor.

It carries out the reaction adenosine(37) in tRNA + dimethylallyl diphosphate = N(6)-dimethylallyladenosine(37) in tRNA + diphosphate. Catalyzes the transfer of a dimethylallyl group onto the adenine at position 37 in tRNAs that read codons beginning with uridine, leading to the formation of N6-(dimethylallyl)adenosine (i(6)A). This is tRNA dimethylallyltransferase from Moorella thermoacetica (strain ATCC 39073 / JCM 9320).